The chain runs to 422 residues: 3-phosphoshikimate 1-carboxyvinyltransferase (422 aa).

3-phosphoshikimate is bound by residues Lys20, Ser21, and Arg25. Lys20 provides a ligand contact to phosphoenolpyruvate. The phosphoenolpyruvate site is built by Gly90 and Arg118. 6 residues coordinate 3-phosphoshikimate: Ser163, Ser164, Gln165, Ser191, Asp306, and Lys333. Residue Gln165 coordinates phosphoenolpyruvate. Asp306 serves as the catalytic Proton acceptor. The phosphoenolpyruvate site is built by Arg337 and Arg378.

Belongs to the EPSP synthase family. In terms of assembly, monomer.

It localises to the cytoplasm. It carries out the reaction 3-phosphoshikimate + phosphoenolpyruvate = 5-O-(1-carboxyvinyl)-3-phosphoshikimate + phosphate. The protein operates within metabolic intermediate biosynthesis; chorismate biosynthesis. In terms of biological role, catalyzes the transfer of the enolpyruvyl moiety of phosphoenolpyruvate (PEP) to the 5-hydroxyl of shikimate-3-phosphate (S3P) to produce enolpyruvyl shikimate-3-phosphate and inorganic phosphate. This is 3-phosphoshikimate 1-carboxyvinyltransferase from Methanocella arvoryzae (strain DSM 22066 / NBRC 105507 / MRE50).